Reading from the N-terminus, the 177-residue chain is Large ribosomal subunit protein uL6 (177 aa).

It belongs to the universal ribosomal protein uL6 family. Part of the 50S ribosomal subunit.

In terms of biological role, this protein binds to the 23S rRNA, and is important in its secondary structure. It is located near the subunit interface in the base of the L7/L12 stalk, and near the tRNA binding site of the peptidyltransferase center. This is Large ribosomal subunit protein uL6 from Shewanella frigidimarina (strain NCIMB 400).